We begin with the raw amino-acid sequence, 495 residues long: Glucose-6-phosphate 1-dehydrogenase (495 aa).

Lysine 51 participates in a covalent cross-link: Isoglutamyl lysine isopeptide (Lys-Gln) (interchain with Q-Cter in protein Pup). NADP(+) contacts are provided by residues 94 to 95 and lysine 154; that span reads DL. Positions 184, 188, 222, and 241 each coordinate substrate. Histidine 246 acts as the Proton acceptor in catalysis. Lysine 345 provides a ligand contact to substrate.

The protein belongs to the glucose-6-phosphate dehydrogenase family.

It carries out the reaction D-glucose 6-phosphate + NADP(+) = 6-phospho-D-glucono-1,5-lactone + NADPH + H(+). It functions in the pathway carbohydrate degradation; pentose phosphate pathway; D-ribulose 5-phosphate from D-glucose 6-phosphate (oxidative stage): step 1/3. Its function is as follows. Catalyzes the oxidation of glucose 6-phosphate to 6-phosphogluconolactone. The chain is Glucose-6-phosphate 1-dehydrogenase from Mycolicibacterium smegmatis (strain ATCC 700084 / mc(2)155) (Mycobacterium smegmatis).